Consider the following 340-residue polypeptide: DNA-directed RNA polymerase subunit alpha (340 aa).

The tract at residues 1–236 is alpha N-terminal domain (alpha-NTD); sequence MLSLSKNWNT…EQLQLFIAFE (236 aa). Residues 251–340 are alpha C-terminal domain (alpha-CTD); that stretch reads FSPYLLKRVD…LSKRYEDSYN (90 aa).

Belongs to the RNA polymerase alpha chain family. Homodimer. The RNAP catalytic core consists of 2 alpha, 1 beta, 1 beta' and 1 omega subunit. When a sigma factor is associated with the core the holoenzyme is formed, which can initiate transcription.

It catalyses the reaction RNA(n) + a ribonucleoside 5'-triphosphate = RNA(n+1) + diphosphate. Functionally, DNA-dependent RNA polymerase catalyzes the transcription of DNA into RNA using the four ribonucleoside triphosphates as substrates. In Rickettsia prowazekii (strain Madrid E), this protein is DNA-directed RNA polymerase subunit alpha.